The chain runs to 137 residues: TM2 domain-containing protein DDB_G0287015 (137 aa).

Residues 9–57 enclose the TM2 domain; sequence QASLVVAYLLLIFLGFFGVHRFYVGRTISGVVYLLTGGIFGIGYIVDFF. The next 2 membrane-spanning stretches (helical) occupy residues 12–32 and 39–59; these read LVVA…RFYV and VVYL…FFLL. The tract at residues 106-137 is disordered; it reads IQPQQQQYYQQPYQQQQYQPQPYQPNSPQYQP.

This sequence belongs to the TM2 family.

The protein resides in the membrane. This chain is TM2 domain-containing protein DDB_G0287015, found in Dictyostelium discoideum (Social amoeba).